Here is a 348-residue protein sequence, read N- to C-terminus: tRNA N6-adenosine threonylcarbamoyltransferase (348 aa).

Fe cation contacts are provided by histidine 118 and histidine 122. Residues 140 to 144, aspartate 173, glycine 186, aspartate 190, and asparagine 279 each bind substrate; that span reads LVSGG. Aspartate 309 is a Fe cation binding site.

This sequence belongs to the KAE1 / TsaD family. The cofactor is Fe(2+).

The protein resides in the cytoplasm. It catalyses the reaction L-threonylcarbamoyladenylate + adenosine(37) in tRNA = N(6)-L-threonylcarbamoyladenosine(37) in tRNA + AMP + H(+). Required for the formation of a threonylcarbamoyl group on adenosine at position 37 (t(6)A37) in tRNAs that read codons beginning with adenine. Is involved in the transfer of the threonylcarbamoyl moiety of threonylcarbamoyl-AMP (TC-AMP) to the N6 group of A37, together with TsaE and TsaB. TsaD likely plays a direct catalytic role in this reaction. This Lactiplantibacillus plantarum (strain ATCC BAA-793 / NCIMB 8826 / WCFS1) (Lactobacillus plantarum) protein is tRNA N6-adenosine threonylcarbamoyltransferase.